Here is a 479-residue protein sequence, read N- to C-terminus: Serine--tRNA ligase, mitochondrial (479 aa).

The transit peptide at 1–42 directs the protein to the mitochondrion; sequence MRLTNRRFSTFLGNALPSKKKGFIFMSQLLYLRTFSTHTSYL. L-serine is bound at residue 287 to 289; the sequence is TAE. 317-319 contacts ATP; sequence RRE. An L-serine-binding site is contributed by E340. Residue 404–407 participates in ATP binding; it reads EITS. L-serine is bound at residue T438.

It belongs to the class-II aminoacyl-tRNA synthetase family. Type-1 seryl-tRNA synthetase subfamily. Homodimer. The tRNA molecule probably binds across the dimer.

It localises to the mitochondrion matrix. The enzyme catalyses tRNA(Ser) + L-serine + ATP = L-seryl-tRNA(Ser) + AMP + diphosphate + H(+). In terms of biological role, catalyzes the attachment of serine to tRNA(Ser). Is also probably able to aminoacylate tRNA(Sec) with serine, to form the misacylated tRNA L-seryl-tRNA(Sec), which will be further converted into selenocysteinyl-tRNA(Sec). The polypeptide is Serine--tRNA ligase, mitochondrial (dia4) (Schizosaccharomyces pombe (strain 972 / ATCC 24843) (Fission yeast)).